Here is a 446-residue protein sequence, read N- to C-terminus: Glutamate-1-semialdehyde 2,1-aminomutase (446 aa).

N6-(pyridoxal phosphate)lysine is present on Lys264.

This sequence belongs to the class-III pyridoxal-phosphate-dependent aminotransferase family. HemL subfamily. The cofactor is pyridoxal 5'-phosphate.

Its subcellular location is the cytoplasm. It carries out the reaction (S)-4-amino-5-oxopentanoate = 5-aminolevulinate. Its pathway is porphyrin-containing compound metabolism; protoporphyrin-IX biosynthesis; 5-aminolevulinate from L-glutamyl-tRNA(Glu): step 2/2. The protein is Glutamate-1-semialdehyde 2,1-aminomutase of Natronomonas pharaonis (strain ATCC 35678 / DSM 2160 / CIP 103997 / JCM 8858 / NBRC 14720 / NCIMB 2260 / Gabara) (Halobacterium pharaonis).